A 405-amino-acid polypeptide reads, in one-letter code: MNIAKPNSYRSGPDERGHFGIFGGRFVAETLMPLILDLEKAYTAAKADPAFQAEMNGYLKNYVGRPSPLYFAERLTEHLGGAKIYLKREELNHTGSHKVNNVLGQIMLARRMGKKRIIAETGAGQHGVATATLCARFGLECVVYMGAVDVERQQPNVIRMEMLGAKVVPVQSGTRTLKDAMNEALRDWVTNVHNTFYCIGTVAGPHPYPTLVRDFQSIIGNETKAQMQEVEGRLPDSLVACIGGGSNAMGLFHPFLDDPSVEIFGVEAAGHGLTQLHAASIAGGRPGVLHGNRTYLLMDADGQIQDAHSISAGLDYPGIGPEHSWLHEIGRVNYLSATDDEALAAFQLLSKLEGIIPALEPAHAIAKVMELAPKRAKDHLMVVNLSGRGDKDVPQVGDILRGKSK.

Position 98 is an N6-(pyridoxal phosphate)lysine (K98).

The protein belongs to the TrpB family. In terms of assembly, tetramer of two alpha and two beta chains. The cofactor is pyridoxal 5'-phosphate.

The catalysed reaction is (1S,2R)-1-C-(indol-3-yl)glycerol 3-phosphate + L-serine = D-glyceraldehyde 3-phosphate + L-tryptophan + H2O. The protein operates within amino-acid biosynthesis; L-tryptophan biosynthesis; L-tryptophan from chorismate: step 5/5. The beta subunit is responsible for the synthesis of L-tryptophan from indole and L-serine. This chain is Tryptophan synthase beta chain, found in Bradyrhizobium diazoefficiens (strain JCM 10833 / BCRC 13528 / IAM 13628 / NBRC 14792 / USDA 110).